The chain runs to 337 residues: Fructose-1,6-bisphosphatase class 1 (337 aa).

Residues Glu89, Asp112, Leu114, and Asp115 each contribute to the Mg(2+) site. Residues 115 to 118, Asn208, Tyr241, and Lys271 each bind substrate; that span reads DGSS. Glu277 provides a ligand contact to Mg(2+).

The protein belongs to the FBPase class 1 family. Homotetramer. Mg(2+) serves as cofactor.

Its subcellular location is the cytoplasm. It catalyses the reaction beta-D-fructose 1,6-bisphosphate + H2O = beta-D-fructose 6-phosphate + phosphate. It participates in carbohydrate biosynthesis; gluconeogenesis. This chain is Fructose-1,6-bisphosphatase class 1, found in Yersinia enterocolitica serotype O:8 / biotype 1B (strain NCTC 13174 / 8081).